Reading from the N-terminus, the 71-residue chain is Small ribosomal subunit protein bS21 (71 aa).

Residues 38–71 (YEKPTTERKRARASAIKRHAKKLARENARRTRLY) form a disordered region. Basic residues predominate over residues 46 to 59 (KRARASAIKRHAKK). Residues 60–71 (LARENARRTRLY) show a composition bias toward basic and acidic residues.

Belongs to the bacterial ribosomal protein bS21 family.

This Hamiltonella defensa subsp. Acyrthosiphon pisum (strain 5AT) protein is Small ribosomal subunit protein bS21.